Here is a 389-residue protein sequence, read N- to C-terminus: Large envelope protein (389 aa).

The residue at position 1 (Met1) is an N-acetylmethionine. Gly2 carries the N-myristoyl glycine; by host lipid modification. A pre-S1 region spans residues 2 to 108; the sequence is GQNLSTSNPL…PPLRTTHPQA (107 aa). Residues 2–163 are pre-S; that stretch reads GQNLSTSNPL…SSRIGDPALN (162 aa). Residues 2–170 are Virion surface; in external conformation-facing; that stretch reads GQNLSTSNPL…ALNMENITSG (169 aa). Residues 2–242 are Intravirion; in internal conformation-facing; sequence GQNLSTSNPL…VGYRWMCLRR (241 aa). Disordered regions lie at residues 76 to 102 and 133 to 154; these read TLPA…PPLR and GGSS…LSTS. Residues 85–95 show a composition bias toward polar residues; it reads STNRQSGRQPT. Residues 109–163 are pre-S2; it reads MQWNSTTFHQTLQDPRVRGLYLPAGGSSSGTVNPVPTTASPTLSTSSRIGDPALN. A compositionally biased stretch (low complexity) spans 142–154; that stretch reads PVPTTASPTLSTS. Residues 171 to 191 form a helical membrane-spanning segment; it reads FLGPLLVLQAGFFLLTRILTI. Over 192-242 the chain is Intravirion; in external conformation; that stretch reads PQSLDSWWTSLSFLGGTTVCLGQNSQSPTSNHSPTSCPPTCVGYRWMCLRR. The chain crosses the membrane as a helical span at residues 243 to 263; that stretch reads FIIFLFILLLCLIFLLVLLDY. At 264-337 the chain is on the virion surface side; the sequence is QGMLPVCPLI…WASARFSWLS (74 aa). N-linked (GlcNAc...) asparagine; by host glycosylation occurs at Asn309. A helical membrane pass occupies residues 338–358; it reads LLVPFVQWFVGLSPTVWLSVI. The Intravirion portion of the chain corresponds to 359–364; that stretch reads WMMWYW. The chain crosses the membrane as a helical span at residues 365–387; the sequence is GPSLYNTLSPFLPLLPIFFYLWV. The Virion surface portion of the chain corresponds to 388–389; that stretch reads YI.

This sequence belongs to the orthohepadnavirus major surface antigen family. As to quaternary structure, in its internal form (Li-HBsAg), interacts with the capsid protein and with the isoform S. Interacts with host chaperone CANX. Associates with host chaperone CANX through its pre-S2 N glycan; this association may be essential for isoform M proper secretion. In terms of assembly, interacts with isoform L. Interacts with the antigens of satellite virus HDV (HDVAgs); this interaction is required for encapsidation of HDV genomic RNA. In terms of processing, isoform M is N-terminally acetylated by host at a ratio of 90%, and N-glycosylated by host at the pre-S2 region. Post-translationally, myristoylated.

It is found in the virion membrane. The large envelope protein exists in two topological conformations, one which is termed 'external' or Le-HBsAg and the other 'internal' or Li-HBsAg. In its external conformation the protein attaches the virus to cell receptors and thereby initiating infection. This interaction determines the species specificity and liver tropism. This attachment induces virion internalization predominantly through caveolin-mediated endocytosis. The large envelope protein also assures fusion between virion membrane and endosomal membrane. In its internal conformation the protein plays a role in virion morphogenesis and mediates the contact with the nucleocapsid like a matrix protein. Its function is as follows. The middle envelope protein plays an important role in the budding of the virion. It is involved in the induction of budding in a nucleocapsid independent way. In this process the majority of envelope proteins bud to form subviral lipoprotein particles of 22 nm of diameter that do not contain a nucleocapsid. In Homo sapiens (Human), this protein is Large envelope protein.